The primary structure comprises 106 residues: ATP-dependent Clp protease adapter protein ClpS (106 aa).

Belongs to the ClpS family. In terms of assembly, binds to the N-terminal domain of the chaperone ClpA.

Its function is as follows. Involved in the modulation of the specificity of the ClpAP-mediated ATP-dependent protein degradation. In Aliivibrio salmonicida (strain LFI1238) (Vibrio salmonicida (strain LFI1238)), this protein is ATP-dependent Clp protease adapter protein ClpS.